Reading from the N-terminus, the 165-residue chain is 2-C-methyl-D-erythritol 2,4-cyclodiphosphate synthase (165 aa).

Residues Asp13 and His15 each coordinate a divalent metal cation. 4-CDP-2-C-methyl-D-erythritol 2-phosphate is bound by residues 13–15 (DRH) and 39–40 (HS). A divalent metal cation is bound at residue His47. 4-CDP-2-C-methyl-D-erythritol 2-phosphate contacts are provided by residues 61–63 (DIG) and Phe141.

The protein belongs to the IspF family. In terms of assembly, homotrimer. The cofactor is a divalent metal cation.

The enzyme catalyses 4-CDP-2-C-methyl-D-erythritol 2-phosphate = 2-C-methyl-D-erythritol 2,4-cyclic diphosphate + CMP. The protein operates within isoprenoid biosynthesis; isopentenyl diphosphate biosynthesis via DXP pathway; isopentenyl diphosphate from 1-deoxy-D-xylulose 5-phosphate: step 4/6. Its function is as follows. Involved in the biosynthesis of isopentenyl diphosphate (IPP) and dimethylallyl diphosphate (DMAPP), two major building blocks of isoprenoid compounds. Catalyzes the conversion of 4-diphosphocytidyl-2-C-methyl-D-erythritol 2-phosphate (CDP-ME2P) to 2-C-methyl-D-erythritol 2,4-cyclodiphosphate (ME-CPP) with a corresponding release of cytidine 5-monophosphate (CMP). The sequence is that of 2-C-methyl-D-erythritol 2,4-cyclodiphosphate synthase from Thermotoga maritima (strain ATCC 43589 / DSM 3109 / JCM 10099 / NBRC 100826 / MSB8).